The chain runs to 74 residues: Defensin-like protein P322 (74 aa).

The N-terminal stretch at 1–19 (MRFFATFFLLAMLVVATKM) is a signal peptide. 4 disulfides stabilise this stretch: cysteine 30–cysteine 74, cysteine 41–cysteine 61, cysteine 47–cysteine 68, and cysteine 51–cysteine 70.

The protein belongs to the DEFL family. Protease inhibitor I18 (RTI/MTI-2) subfamily. In terms of tissue distribution, tuber.

It localises to the secreted. The sequence is that of Defensin-like protein P322 from Solanum tuberosum (Potato).